Here is a 202-residue protein sequence, read N- to C-terminus: Na(+)-translocating NADH-quinone reductase subunit E (202 aa).

6 consecutive transmembrane segments (helical) span residues 11–31 (SVFI…FIAV), 35–55 (IETA…TVPA), 81–101 (FIAL…LEMV), 114–134 (GIFL…LFMI), 144–164 (VVYG…MAGV), and 180–200 (LGIT…FSGI).

The protein belongs to the NqrDE/RnfAE family. As to quaternary structure, composed of six subunits; NqrA, NqrB, NqrC, NqrD, NqrE and NqrF.

The protein resides in the cell inner membrane. The enzyme catalyses a ubiquinone + n Na(+)(in) + NADH + H(+) = a ubiquinol + n Na(+)(out) + NAD(+). In terms of biological role, NQR complex catalyzes the reduction of ubiquinone-1 to ubiquinol by two successive reactions, coupled with the transport of Na(+) ions from the cytoplasm to the periplasm. NqrA to NqrE are probably involved in the second step, the conversion of ubisemiquinone to ubiquinol. The polypeptide is Na(+)-translocating NADH-quinone reductase subunit E (Methylococcus capsulatus (strain ATCC 33009 / NCIMB 11132 / Bath)).